The following is a 203-amino-acid chain: Nucleoside triphosphate pyrophosphatase (203 aa).

The active-site Proton acceptor is the D78.

Belongs to the Maf family. A divalent metal cation is required as a cofactor.

The protein resides in the cytoplasm. The catalysed reaction is a ribonucleoside 5'-triphosphate + H2O = a ribonucleoside 5'-phosphate + diphosphate + H(+). The enzyme catalyses a 2'-deoxyribonucleoside 5'-triphosphate + H2O = a 2'-deoxyribonucleoside 5'-phosphate + diphosphate + H(+). In terms of biological role, nucleoside triphosphate pyrophosphatase. May have a dual role in cell division arrest and in preventing the incorporation of modified nucleotides into cellular nucleic acids. This is Nucleoside triphosphate pyrophosphatase from Prochlorococcus marinus (strain AS9601).